Here is an 850-residue protein sequence, read N- to C-terminus: DNA mismatch repair protein MutS (850 aa).

ATP is bound at residue G608 to S615.

Belongs to the DNA mismatch repair MutS family.

This protein is involved in the repair of mismatches in DNA. It is possible that it carries out the mismatch recognition step. This protein has a weak ATPase activity. The polypeptide is DNA mismatch repair protein MutS (Thiobacillus denitrificans (strain ATCC 25259 / T1)).